Consider the following 176-residue polypeptide: Large ribosomal subunit protein eL20 (176 aa).

Residue Lys-11 forms a Glycyl lysine isopeptide (Lys-Gly) (interchain with G-Cter in SUMO2) linkage. The residue at position 63 (Tyr-63) is a Phosphotyrosine. Phosphoserine is present on Ser-71. At Lys-76 the chain carries N6-succinyllysine. At Ser-123 the chain carries Phosphoserine. Glycyl lysine isopeptide (Lys-Gly) (interchain with G-Cter in SUMO2) cross-links involve residues Lys-128 and Lys-170.

This sequence belongs to the eukaryotic ribosomal protein eL20 family. In terms of assembly, component of the large ribosomal subunit. Binds IPO9 with high affinity.

It is found in the cytoplasm. In terms of biological role, component of the large ribosomal subunit. The ribosome is a large ribonucleoprotein complex responsible for the synthesis of proteins in the cell. The protein is Large ribosomal subunit protein eL20 (Rpl18a) of Mus musculus (Mouse).